Consider the following 545-residue polypeptide: Degenerin-like protein asic-2 (545 aa).

Over 1–34 the chain is Cytoplasmic; it reads MRGGGFVQIFKDFSNWSTVAVVPHVANANNKISR. The chain crosses the membrane as a helical span at residues 35–55; the sequence is IFWIAIFLFVLGMFAYELYIL. At 56–457 the chain is on the extracellular side; sequence IAKFFSYPAT…NVINDLGGQA (402 aa). Cys83 and Cys191 form a disulfide bridge. Asn201 is a glycosylation site (N-linked (GlcNAc...) asparagine). 5 cysteine pairs are disulfide-bonded: Cys284/Cys370, Cys305/Cys366, Cys309/Cys364, Cys318/Cys343, and Cys320/Cys334. N-linked (GlcNAc...) asparagine glycosylation occurs at Asn350. Residues 458–478 form a helical membrane-spanning segment; the sequence is GLWLGLSVISVVEMTGLMLVM. The GAS motif; ion selectivity filter signature appears at 462 to 464; sequence GLS. Over 479-545 the chain is Cytoplasmic; it reads GAFCVTGGAI…NKGDEEKKKK (67 aa). Basic and acidic residues-rich tracts occupy residues 514–523 and 534–545; these read DHLEKKHGEM and IENKGDEEKKKK. Residues 514-545 form a disordered region; the sequence is DHLEKKHGEMESGSDGEVDDIENKGDEEKKKK.

This sequence belongs to the amiloride-sensitive sodium channel (TC 1.A.6) family. As to quaternary structure, can form homotrimers. Heterotrimer; forms functional heterotrimers producing channel with different properties.

Its subcellular location is the cell membrane. The enzyme catalyses Na(+)(in) = Na(+)(out). Its activity is regulated as follows. Inhibited by the diuretic drug amiloride. Its function is as follows. Could form pH-gated heterotrimeric sodium channels that act as postsynaptic excitatory sensors in the nervous system, generating rapid, transient inward currents that fully desensitize upon extracellular acidification. This chain is Degenerin-like protein asic-2 (asic-2), found in Caenorhabditis elegans.